The chain runs to 320 residues: Stress-involved WYL domain-containing regulator (320 aa).

In terms of domain architecture, HTH deoR-type spans Thr-7–Gln-65. The H-T-H motif DNA-binding region spans Trp-24–Asp-43. The WYL domain occupies Asp-139–Phe-218. A WCX domain region spans residues Val-245 to Arg-320.

In terms of assembly, homodimer.

Transcriptional activator. Acts as a transcriptional activator of the MSMEG_1357-56 operon upon genotoxic stress. Controls adjacent genes that belong to the DinB/YfiT-like putative metalloenzymes superfamily by upregulating their expression in response to various genotoxic stress conditions, including exposure to H(2)O(2) or the natural antibiotic zeocin, as well as mitomycin C (MMC), diamide and UVC radiation. Upon genotoxic stress, upregulates two genes encoding proteins of the DinB/YfiT-like putative metalloenzymes superfamily, MSMEG_1357 and MSMEG_1356. Binds different forms of single-stranded DNA (ssDNA) with high affinity, primarily through its characteristic WYL domain. Binds nucleic acids with single-stranded regions, such as polyT 20mer ssDNA, 5' tailed, 3' tailed and fork DNA, but not ssRNA. The polypeptide is Stress-involved WYL domain-containing regulator (Mycolicibacterium smegmatis (strain ATCC 700084 / mc(2)155) (Mycobacterium smegmatis)).